A 275-amino-acid chain; its full sequence is Leucine-rich repeat-containing protein 3C (275 aa).

The signal sequence occupies residues 1–41; that stretch reads MRMTSSSFVSYCTPGLCQFMAMLPTAGHLLPLLLVIGTGGT. The LRRNT domain occupies 42 to 79; that stretch reads VPSPQVPPRGCYVAKEAGERTFRCSQAGLSAVPSGIPN. 3 LRR repeats span residues 80-101, 104-125, and 129-150; these read DTRK…AFQH, VLEE…AFQG, and TLRH…AFVG. The N-linked (GlcNAc...) asparagine glycan is linked to Asn156. The 53-residue stretch at 160–212 folds into the LRRCT domain; sequence NPWHCDCALQEVLRQVRLVPGTGTGIVCGSGARPDLVGQEFLLLAGEEELCGS. The chain crosses the membrane as a helical span at residues 225 to 245; it reads LLVTMGGWLTLMVAYLVHYVW.

This sequence belongs to the LRRC3 family.

It is found in the membrane. The protein is Leucine-rich repeat-containing protein 3C (LRRC3C) of Homo sapiens (Human).